A 787-amino-acid polypeptide reads, in one-letter code: MAAARPARGPELPLLGLLLLLLLGDPGRGAASSGNATGPGPRSAGGSARRSAAVTGPPPPLSHCGRAAPCEPLRYNVCLGSVLPYGATSTLLAGDSDSQEEAHGKLVLWSGLRNAPRCWAVIQPLLCAVYMPKCENDRVELPSRTLCQATRGPCAIVERERGWPDFLRCTPDRFPEGCTNEVQNIKFNSSGQCEVPLVRTDNPKSWYEDVEGCGIQCQNPLFTEAEHQDMHSYIAAFGAVTGLCTLFTLATFVADWRNSNRYPAVILFYVNACFFVGSIGWLAQFMDGARREIVCRADGTMRLGEPTSNETLSCVIIFVIVYYALMAGVVWFVVLTYAWHTSFKALGTTYQPLSGKTSYFHLLTWSLPFVLTVAILAVAQVDGDSVSGICFVGYKNYRYRAGFVLAPIGLVLIVGGYFLIRGVMTLFSIKSNHPGLLSEKAASKINETMLRLGIFGFLAFGFVLITFSCHFYDFFNQAEWERSFRDYVLCQANVTIGLPTKQPIPDCEIKNRPSLLVEKINLFAMFGTGIAMSTWVWTKATLLIWRRTWCRLTGQSDDEPKRIKKSKMIAKAFSKRHELLQNPGQELSFSMHTVSHDGPVAGLAFDLNEPSADVSSAWAQHVTKMVARRGAILPQDISVTPVATPVPPEEQANLWLVEAEISPELQKRLGRKKKRRKRKKEVCPLAPPPELHPPAPAPSTIPRLPQLPRQKCLVAAGAWGAGDSCRQGAWTLVSNPFCPEPSPPQDPFLPSAPAPVAWAHGRRQGLGPIHSRTNLMDTELMDADSDF.

A signal peptide spans 1–27 (MAAARPARGPELPLLGLLLLLLLGDPG). The Extracellular segment spans residues 28–233 (RGAASSGNAT…EAEHQDMHSY (206 aa)). Residues 30-60 (AASSGNATGPGPRSAGGSARRSAAVTGPPPP) are disordered. An N-linked (GlcNAc...) asparagine glycan is attached at Asn-35. The segment covering 38-53 (GPGPRSAGGSARRSAA) has biased composition (low complexity). Cystine bridges form between Cys-64–Cys-178, Cys-70–Cys-134, Cys-78–Cys-127, Cys-118–Cys-154, and Cys-147–Cys-169. The region spanning 65 to 181 (GRAAPCEPLR…DRFPEGCTNE (117 aa)) is the FZ domain. Asp-95 contacts cholesterol. N-linked (GlcNAc...) asparagine glycosylation occurs at Asn-188. Disulfide bonds link Cys-193–Cys-213 and Cys-217–Cys-295. A helical transmembrane segment spans residues 234–254 (IAAFGAVTGLCTLFTLATFVA). The Cytoplasmic segment spans residues 255–262 (DWRNSNRY). Residues 263-283 (PAVILFYVNACFFVGSIGWLA) form a helical membrane-spanning segment. The Extracellular portion of the chain corresponds to 284–314 (QFMDGARREIVCRADGTMRLGEPTSNETLSC). The N-linked (GlcNAc...) asparagine glycan is linked to Asn-309. Residues Cys-314 and Cys-390 are joined by a disulfide bond. The chain crosses the membrane as a helical span at residues 315-335 (VIIFVIVYYALMAGVVWFVVL). Residues 336–358 (TYAWHTSFKALGTTYQPLSGKTS) are Cytoplasmic-facing. A helical transmembrane segment spans residues 359 to 379 (YFHLLTWSLPFVLTVAILAVA). Residues 380 to 402 (QVDGDSVSGICFVGYKNYRYRAG) lie on the Extracellular side of the membrane. Tyr-394 is a binding site for cholesterol. The chain crosses the membrane as a helical span at residues 403–423 (FVLAPIGLVLIVGGYFLIRGV). The Cytoplasmic portion of the chain corresponds to 424–451 (MTLFSIKSNHPGLLSEKAASKINETMLR). Residues 452-472 (LGIFGFLAFGFVLITFSCHFY) traverse the membrane as a helical segment. Topologically, residues 473 to 524 (DFFNQAEWERSFRDYVLCQANVTIGLPTKQPIPDCEIKNRPSLLVEKINLFA) are extracellular. A disulfide bridge links Cys-490 with Cys-507. A helical membrane pass occupies residues 525–545 (MFGTGIAMSTWVWTKATLLIW). Positions 538-569 (TKATLLIWRRTWCRLTGQSDDEPKRIKKSKMI) are interaction with BBS5 and BBS7. Topologically, residues 546–787 (RRTWCRLTGQ…TELMDADSDF (242 aa)) are cytoplasmic. A phosphoserine mark is found at Ser-556, Ser-574, and Ser-590. A required for interaction with PRKACA region spans residues 570–653 (AKAFSKRHEL…TPVPPEEQAN (84 aa)). The interval 581–593 (QNPGQELSFSMHT) is interaction with DLG5. Position 593 is a phosphothreonine (Thr-593). Phosphoserine is present on residues Ser-595 and Ser-638. Thr-640 and Thr-644 each carry phosphothreonine. Position 662 is a phosphoserine (Ser-662). A disordered region spans residues 667 to 704 (KRLGRKKKRRKRKKEVCPLAPPPELHPPAPAPSTIPRL). Basic residues predominate over residues 668 to 680 (RLGRKKKRRKRKK). Over residues 685-699 (LAPPPELHPPAPAPS) the composition is skewed to pro residues.

It belongs to the G-protein coupled receptor Fz/Smo family. As to quaternary structure, homodimer. Interacts (via C-terminus) with protein kinase A catalytic subunit PRKACA; interacts with free PRKACA subunits and the interaction leads to sequestration of PRKACA at the membrane, preventing PRKACA-mediated phosphorylation of GLI transcription factors. Interacts with ARRB2. Interacts with KIF7. Interacts with BBS5 and BBS7; the interactions are indicative for the association of SMO with the BBsome complex to facilitate ciliary localization of SMO. Interacts with DLG5 and SDCBP. Interacts with GAS8/DRC4. Phosphorylation by GRK kinases is required for interaction with protein kinase A catalytic subunit PRKACA.

It is found in the cell membrane. Its subcellular location is the cell projection. The protein resides in the cilium. G protein-coupled receptor which associates with the patched protein (PTCH) to transduce hedgehog protein signaling. Binding of sonic hedgehog (SHH) to its receptor patched prevents inhibition of smoothened (SMO) by patched. When active, SMO binds to and sequesters protein kinase A catalytic subunit PRKACA at the cell membrane, preventing PRKACA-mediated phosphorylation of GLI transcription factors which releases the GLI proteins from PRKACA-mediated inhibition and allows for transcriptional activation of hedgehog pathway target genes. Required for the accumulation of KIF7, GLI2 and GLI3 in the cilia. Interacts with DLG5 at the ciliary base to induce the accumulation of KIF7 and GLI2 at the ciliary tip for GLI2 activation. The protein is Protein smoothened (SMO) of Homo sapiens (Human).